The primary structure comprises 350 residues: Protein RecA (350 aa).

An ATP-binding site is contributed by Gly80–Thr87.

It belongs to the RecA family.

Its subcellular location is the cytoplasm. In terms of biological role, can catalyze the hydrolysis of ATP in the presence of single-stranded DNA, the ATP-dependent uptake of single-stranded DNA by duplex DNA, and the ATP-dependent hybridization of homologous single-stranded DNAs. It interacts with LexA causing its activation and leading to its autocatalytic cleavage. This chain is Protein RecA, found in Chlorobium limicola (strain DSM 245 / NBRC 103803 / 6330).